The chain runs to 300 residues: Epimerase family protein SACOL0834 (300 aa).

The protein belongs to the NAD(P)-dependent epimerase/dehydratase family. SDR39U1 subfamily.

This Staphylococcus aureus (strain COL) protein is Epimerase family protein SACOL0834.